A 901-amino-acid chain; its full sequence is MAANFKEQSKKHFDLNGQSYTYYDLKAVEEQGITKVSNLPYSIRVLLESLLRQEDDFVITDDHIKALSQFGKDGNEGEVPFKPSRVILQDFTGVPAVVDLASLRKAMDDVGGDITKINPEVPVDLVIDHSVQVDSYANPEALERNMKLEFERNYERYQFLNWATKAFDNYNAVPPATGIVHQVNLEYLASVVHVRDVDGEKTAFPDTLVGTDSHTTMINGIGVLGWGVGGIEAEAGMLGQPSYFPIPEVIGVRLVNSLPQGATATDLALRVTQELRKKGVVGKFVEFFGPGVQHLPLADRATIANMAPEYGATCGFFPVDDESLKYMKLTGRSDEHIALVKEYLKQNHMFFDVEKEDPNYTDVIELDLSTVEASLSGPKRPQDLIFLSDMKSSFENSVTAPAGNQGHGLDKSEFDKKAEINFKDGSKATMKTGDIAIAAITSCTNTSNPYVMLGAGLVAKKAVEKGLKVPEYVKTSLAPGSKVVTGYLRDAGLQPYLDDLGFNLVGYGCTTCIGNSGPLLPEIEKAIADEDLLVTSVLSGNRNFEGRIHPLVKANYLASPQLVVAYALAGTVDIDLQNEPIGKGNDGEDVYLKDIWPSIKEVSDTVDSVVTPELFIEEYNNVYNNNELWNEIDVTDQPLYDFDPNSTYIQNPSFFQGLSKEPGTIVPLNGLRVMGKFGDSVTTDHISPAGAIGKDTPAGKYLQDHQVPIREFNSYGSRRGNHEVMVRGTFANIRIKNQLAPGTEGGFTTYWPTNEVMPIFDAAMKYKEDGTGLVVLAGNDYGMGSSRDWAAKGTNLLGVKTVIAQSYERIHRSNLVMMGVLPLEFKKGESADSLGLDGTEEISVNIDENVQPHDYVKVTAKKQDGDLVEFDAMVRFDSLVEMDYYRHGGILQMVLRNKLAQ.

[4Fe-4S] cluster contacts are provided by C443, C509, and C512.

It belongs to the aconitase/IPM isomerase family. In terms of assembly, monomer. Requires [4Fe-4S] cluster as cofactor.

The enzyme catalyses citrate = D-threo-isocitrate. It carries out the reaction (2S,3R)-3-hydroxybutane-1,2,3-tricarboxylate = 2-methyl-cis-aconitate + H2O. It participates in carbohydrate metabolism; tricarboxylic acid cycle; isocitrate from oxaloacetate: step 2/2. The protein operates within organic acid metabolism; propanoate degradation. In terms of biological role, involved in the catabolism of short chain fatty acids (SCFA) via the tricarboxylic acid (TCA)(acetyl degradation route) and probably the 2-methylcitrate cycle I (propionate degradation route). Catalyzes the reversible isomerization of citrate to isocitrate via cis-aconitate. Could catalyze the hydration of 2-methyl-cis-aconitate to yield (2R,3S)-2-methylisocitrate. The apo form of AcnA functions as a RNA-binding regulatory protein. This chain is Aconitate hydratase A (acnA), found in Staphylococcus aureus (strain COL).